We begin with the raw amino-acid sequence, 295 residues long: Protoheme IX farnesyltransferase 2 (295 aa).

Helical transmembrane passes span 9–29 (ITKPGIIFGNVLSVAGGFFLA), 36–56 (LAVFLAAMIGTSLVVASGCVF), 80–100 (LISLKLALVYATVLGVAGVAL), 108–128 (LAALFAVIGFIIYVGFYSLYL), 135–155 (GTLVGSLSGAMPPVIGYVAVT), 163–183 (LTLLVMFSLWQMPHSYAIAIF), 209–229 (ILIYILAFLVATLMLTFSGYA), 230–250 (GMSYLAVAAAMGMYWLYMAWT), and 265–285 (FVFSIFTITALSVMMSLDFKV).

This sequence belongs to the UbiA prenyltransferase family. Protoheme IX farnesyltransferase subfamily.

Its subcellular location is the cell inner membrane. It catalyses the reaction heme b + (2E,6E)-farnesyl diphosphate + H2O = Fe(II)-heme o + diphosphate. It participates in porphyrin-containing compound metabolism; heme O biosynthesis; heme O from protoheme: step 1/1. Converts heme B (protoheme IX) to heme O by substitution of the vinyl group on carbon 2 of heme B porphyrin ring with a hydroxyethyl farnesyl side group. The protein is Protoheme IX farnesyltransferase 2 of Pseudomonas fluorescens (strain Pf0-1).